Consider the following 46-residue polypeptide: Mu-segestritoxin-Sf1g (46 aa).

Intrachain disulfides connect cysteine 3–cysteine 19, cysteine 10–cysteine 22, cysteine 18–cysteine 42, and cysteine 24–cysteine 40. Residues 31 to 33 (RPW) form a keys region for toxin activity region.

It belongs to the neurotoxin 16 (SFI) family. As to expression, expressed by the venom gland.

It is found in the secreted. Functionally, insecticidal toxin. It inhibits insect voltage-gated sodium channels (Nav) by partially blocking the channel pore in DUM neurons from the American cockroach, not by acting as a gating modifier. The inhibition is only partially reversible after prolonged washout. In vivo, the toxin causes flaccid paralysis followed by death when injected into Heliothis virescens larvae. It also causes uncoordinated movements followed by full paralysis to sheep blowflies (Lucilia cuprina). When the toxin is fused to snowdrop lectin, it is orally active against larvae of the tomato moth (Laconobia oleracea), the rice brown planthopper (Nilaparvata lugens), and the peach-potato aphid (Myzus persicae). The chain is Mu-segestritoxin-Sf1g from Segestria florentina (Tube-web spider).